The chain runs to 172 residues: Light-harvesting complex-like protein OHP2, chloroplastic (172 aa).

Residues 1-43 (MSVASPIQCIRILNPSSSSSSSTASSSFRFSTTTKPCVFIIRC) constitute a chloroplast transit peptide. Residues 44 to 135 (SQTEGPLRRP…QPKNEISNGR (92 aa)) lie on the Stromal side of the membrane. The interval 45 to 90 (QTEGPLRRPSAPPTLREPQKPVPPSQPSSSPPPSPPPQKAVAVDGK) is disordered. Positions 64 to 82 (KPVPPSQPSSSPPPSPPPQ) are enriched in pro residues. A helical transmembrane segment spans residues 136 to 156 (WAMFGFAVGMLTEYATGSDLV). The Lumenal portion of the chain corresponds to 157 to 172 (DQVKILLSNFGILDLE).

The protein belongs to the ELIP/psbS family. Component of a high molecular weight complex containing OHP1, OHP2 and HCF244, and PSII core proteins D1/D2, HCF136 and HCF173. Forms a trimeric complex with OHP1 and HCF244 that mutually stabilizes each subunit.

The protein localises to the plastid. It is found in the chloroplast thylakoid membrane. May play a photoprotective role within PSI in response to light stress. Forms a trimeric complex with OHP1 and HCF244 that is required to promote PSII core subunit assembly. The trimeric complex forms a transient PSII reaction center-like complex with PsbA, PsbD, PsbE, PsbF and PsbI subunits in thylakoids for early assembly of PSII as well as PSII repair. The trimeric complex is required for the recruitment of ribosomes to the psbA mRNA during PSII biogenesis and repair. Forms a heterodimer with OHP1 that binds chlorophylls and carotenoids, and that may function in the delivery of pigments to the PsbA subunit of PSII. This chain is Light-harvesting complex-like protein OHP2, chloroplastic, found in Arabidopsis thaliana (Mouse-ear cress).